The primary structure comprises 393 residues: Prokineticin receptor 1 (393 aa).

Topologically, residues 1 to 62 (METTMGFMDD…TNSRTFFAAK (62 aa)) are extracellular. 3 N-linked (GlcNAc...) asparagine glycosylation sites follow: asparagine 11, asparagine 14, and asparagine 36. The helical transmembrane segment at 63–83 (IVIGMALVGIMLVCGIGNFIF) threads the bilayer. Topologically, residues 84–98 (IAALVRYKKLRNLTN) are cytoplasmic. Residues 99–119 (LLIANLAISDFLVAIVCCPFE) form a helical membrane-spanning segment. Over 120 to 146 (MDYYVVRQLSWEHGHVLCTSVNYLRTV) the chain is Extracellular. A disulfide bridge connects residues cysteine 137 and cysteine 217. A helical membrane pass occupies residues 147-167 (SLYVSTNALLAIAIDRYLAIV). Topologically, residues 168-180 (HPLRPRMKCQTAT) are cytoplasmic. Residues 181–201 (GLIALVWTVSILIAIPSAYFT) form a helical membrane-spanning segment. Over 202–232 (TETVLVIVKSQEKIFCGQIWPVDQQLYYKSY) the chain is Extracellular. The helical transmembrane segment at 233–253 (FLFIFGIEFVGPVVTMTLCYA) threads the bilayer. The Cytoplasmic portion of the chain corresponds to 254 to 282 (RISRELWFKAVPGFQTEQIRKRLRCRRKT). Residues 283–303 (VLVLMCILTAYVLCWAPFYGF) form a helical membrane-spanning segment. Residues 304-322 (TIVRDFFPTVFVKEKHYLT) are Extracellular-facing. Residues 323–343 (AFYIVECIAMSNSMINTLCFV) form a helical membrane-spanning segment. Residues 344–393 (TVKNDTVKYFKKIMLLHWKASYNGGKSSADLDLKTIGMPATEEVDCIRLK) lie on the Cytoplasmic side of the membrane.

This sequence belongs to the G-protein coupled receptor 1 family. In terms of tissue distribution, localizes to glandular epithelium, stroma and vascular endothelial cells of first trimester decidua (at protein level). Up-regulated in first trimester decidua when compared with non-pregnant endometrium. Expressed in the stomach, throughout the small intestine, colon, rectum, thyroid gland, pituitary gland, salivary gland, adrenal gland, testis, ovary, brain, spleen, prostate and pancreas.

Its subcellular location is the cell membrane. Receptor for prokineticin 1. Exclusively coupled to the G(q) subclass of heteromeric G proteins. Activation leads to mobilization of calcium, stimulation of phosphoinositide turnover and activation of p44/p42 mitogen-activated protein kinase. May play a role during early pregnancy. The sequence is that of Prokineticin receptor 1 (PROKR1) from Homo sapiens (Human).